A 197-amino-acid chain; its full sequence is Small ribosomal subunit protein eS1 (197 aa).

The protein belongs to the eukaryotic ribosomal protein eS1 family.

The sequence is that of Small ribosomal subunit protein eS1 from Methanoculleus marisnigri (strain ATCC 35101 / DSM 1498 / JR1).